The sequence spans 90 residues: Acylphosphatase (90 aa).

The region spanning 3–90 (HYHAIITGRV…AHYQDFRIKG (88 aa)) is the Acylphosphatase-like domain. Active-site residues include Arg-18 and Asn-36.

The protein belongs to the acylphosphatase family.

It catalyses the reaction an acyl phosphate + H2O = a carboxylate + phosphate + H(+). The protein is Acylphosphatase (acyP) of Bacillus pumilus (strain SAFR-032).